Here is a 445-residue protein sequence, read N- to C-terminus: Methylenetetrahydrofolate--tRNA-(uracil-5-)-methyltransferase TrmFO (445 aa).

8-13 is an FAD binding site; sequence GAGLAG.

Belongs to the MnmG family. TrmFO subfamily. It depends on FAD as a cofactor.

Its subcellular location is the cytoplasm. The catalysed reaction is uridine(54) in tRNA + (6R)-5,10-methylene-5,6,7,8-tetrahydrofolate + NADH + H(+) = 5-methyluridine(54) in tRNA + (6S)-5,6,7,8-tetrahydrofolate + NAD(+). It catalyses the reaction uridine(54) in tRNA + (6R)-5,10-methylene-5,6,7,8-tetrahydrofolate + NADPH + H(+) = 5-methyluridine(54) in tRNA + (6S)-5,6,7,8-tetrahydrofolate + NADP(+). Its function is as follows. Catalyzes the folate-dependent formation of 5-methyl-uridine at position 54 (M-5-U54) in all tRNAs. The sequence is that of Methylenetetrahydrofolate--tRNA-(uracil-5-)-methyltransferase TrmFO from Rhodobacter capsulatus (strain ATCC BAA-309 / NBRC 16581 / SB1003).